Reading from the N-terminus, the 404-residue chain is Cysteine desulfurase IscS (404 aa).

Pyridoxal 5'-phosphate contacts are provided by residues A75–T76, N155, Q183, and S203–H205. At K206 the chain carries N6-(pyridoxal phosphate)lysine. Pyridoxal 5'-phosphate is bound at residue T243. C328 functions as the Cysteine persulfide intermediate in the catalytic mechanism. Residue C328 participates in [2Fe-2S] cluster binding.

This sequence belongs to the class-V pyridoxal-phosphate-dependent aminotransferase family. NifS/IscS subfamily. As to quaternary structure, homodimer. Forms a heterotetramer with IscU, interacts with other sulfur acceptors. Pyridoxal 5'-phosphate serves as cofactor.

Its subcellular location is the cytoplasm. It carries out the reaction (sulfur carrier)-H + L-cysteine = (sulfur carrier)-SH + L-alanine. The protein operates within cofactor biosynthesis; iron-sulfur cluster biosynthesis. Master enzyme that delivers sulfur to a number of partners involved in Fe-S cluster assembly, tRNA modification or cofactor biosynthesis. Catalyzes the removal of elemental sulfur atoms from cysteine to produce alanine. Functions as a sulfur delivery protein for Fe-S cluster synthesis onto IscU, an Fe-S scaffold assembly protein, as well as other S acceptor proteins. The polypeptide is Cysteine desulfurase IscS (Haemophilus influenzae (strain PittGG)).